An 82-amino-acid chain; its full sequence is uncharacterized protein (82 aa).

2 helical membrane passes run 32 to 52 (PFSIALDLVSGTMVGLLIGIL) and 59 to 79 (SKPLFLIIFTIIGMIAGFNII).

The protein localises to the cell membrane. This is an uncharacterized protein from Rickettsia prowazekii (strain Madrid E).